Here is a 95-residue protein sequence, read N- to C-terminus: Mitochondrial import inner membrane translocase subunit Tim13 (95 aa).

A Twin CX3C motif motif is present at residues 46-69 (CFKKCIGKPGSTLDNSEQKCIAMC). Intrachain disulfides connect cysteine 46-cysteine 69 and cysteine 50-cysteine 65.

It belongs to the small Tim family. Heterohexamer; composed of 3 copies of TIMM8 (TIMM8A or TIMM8B) and 3 copies of TIMM13, named soluble 70 kDa complex. Associates with the TIM22 complex, whose core is composed of TIMM22.

It localises to the mitochondrion inner membrane. Mitochondrial intermembrane chaperone that participates in the import and insertion of some multi-pass transmembrane proteins into the mitochondrial inner membrane. Also required for the transfer of beta-barrel precursors from the TOM complex to the sorting and assembly machinery (SAM complex) of the outer membrane. Acts as a chaperone-like protein that protects the hydrophobic precursors from aggregation and guide them through the mitochondrial intermembrane space. The TIMM8-TIMM13 complex mediates the import of some proteins while the predominant TIMM9-TIMM10 70 kDa complex mediates the import of much more proteins. The polypeptide is Mitochondrial import inner membrane translocase subunit Tim13 (timm13) (Danio rerio (Zebrafish)).